Here is a 382-residue protein sequence, read N- to C-terminus: Type 2 DNA topoisomerase 6 subunit A (382 aa).

Positions 14–155 (YDPQKVLKKL…MHITADRRGY (142 aa)) constitute a Topo IIA-type catalytic domain. The O-(5'-phospho-DNA)-tyrosine intermediate role is filled by tyrosine 108. 2 residues coordinate Mg(2+): glutamate 202 and aspartate 254.

It belongs to the TOP6A family. As to quaternary structure, homodimer. Heterotetramer of two Top6A and two Top6B chains. Mg(2+) is required as a cofactor.

The enzyme catalyses ATP-dependent breakage, passage and rejoining of double-stranded DNA.. Functionally, relaxes both positive and negative superturns and exhibits a strong decatenase activity. The polypeptide is Type 2 DNA topoisomerase 6 subunit A (Pyrococcus abyssi (strain GE5 / Orsay)).